Consider the following 102-residue polypeptide: Trans-acting regulatory protein HvrA (102 aa).

A DNA-binding region spans residues 80 to 85; the sequence is RGRKPK.

Belongs to the histone-like protein H-NS family. In terms of assembly, homodimer that oligomerizes on DNA into higher-order complexes that form bridges between disparate regions of DNA compacting it.

The protein localises to the cytoplasm. It is found in the nucleoid. Functionally, a dim-light trans-acting activator of Puf and Puh expression, that has no effect on the expression of the Puc operon. Responsible for regulating light-harvesting-I and reaction center structural gene expression differentially from that of light-harvesting-II expression in response to alterations in light. Proper light regulation of light-harvesting and reaction center polypeptide synthesis is an important physiological trait that enables cells to adapt to ever-changing environmental conditions of light intensity. The sequence is that of Trans-acting regulatory protein HvrA (hvrA) from Rhodobacter capsulatus (Rhodopseudomonas capsulata).